Consider the following 210-residue polypeptide: Na(+)-translocating NADH-quinone reductase subunit D (210 aa).

A run of 5 helical transmembrane segments spans residues 42 to 62, 72 to 92, 103 to 123, 131 to 151, and 178 to 198; these read FVMT…VSLI, IIVQ…ILKA, VFVG…AFAM, FIDG…VGFF, and NGLM…IWAI.

This sequence belongs to the NqrDE/RnfAE family. Composed of six subunits; NqrA, NqrB, NqrC, NqrD, NqrE and NqrF.

The protein localises to the cell inner membrane. The enzyme catalyses a ubiquinone + n Na(+)(in) + NADH + H(+) = a ubiquinol + n Na(+)(out) + NAD(+). NQR complex catalyzes the reduction of ubiquinone-1 to ubiquinol by two successive reactions, coupled with the transport of Na(+) ions from the cytoplasm to the periplasm. NqrA to NqrE are probably involved in the second step, the conversion of ubisemiquinone to ubiquinol. This Vibrio cholerae serotype O1 (strain M66-2) protein is Na(+)-translocating NADH-quinone reductase subunit D.